Consider the following 175-residue polypeptide: Protein-export protein SecB (175 aa).

It belongs to the SecB family. In terms of assembly, homotetramer, a dimer of dimers. One homotetramer interacts with 1 SecA dimer.

It localises to the cytoplasm. In terms of biological role, one of the proteins required for the normal export of preproteins out of the cell cytoplasm. It is a molecular chaperone that binds to a subset of precursor proteins, maintaining them in a translocation-competent state. It also specifically binds to its receptor SecA. The polypeptide is Protein-export protein SecB (Anaplasma marginale (strain Florida)).